The sequence spans 433 residues: 3-phosphoshikimate 1-carboxyvinyltransferase (433 aa).

Residues Lys-23, Ser-24, and Arg-28 each coordinate 3-phosphoshikimate. Residue Lys-23 coordinates phosphoenolpyruvate. Positions 95 and 123 each coordinate phosphoenolpyruvate. 3-phosphoshikimate-binding residues include Ser-167, Gln-169, Asp-317, and Lys-344. Gln-169 is a binding site for phosphoenolpyruvate. Asp-317 serves as the catalytic Proton acceptor. Residues Arg-348 and Arg-390 each contribute to the phosphoenolpyruvate site.

Belongs to the EPSP synthase family. As to quaternary structure, monomer.

The protein localises to the cytoplasm. The enzyme catalyses 3-phosphoshikimate + phosphoenolpyruvate = 5-O-(1-carboxyvinyl)-3-phosphoshikimate + phosphate. It participates in metabolic intermediate biosynthesis; chorismate biosynthesis; chorismate from D-erythrose 4-phosphate and phosphoenolpyruvate: step 6/7. In terms of biological role, catalyzes the transfer of the enolpyruvyl moiety of phosphoenolpyruvate (PEP) to the 5-hydroxyl of shikimate-3-phosphate (S3P) to produce enolpyruvyl shikimate-3-phosphate and inorganic phosphate. The polypeptide is 3-phosphoshikimate 1-carboxyvinyltransferase (Staphylococcus epidermidis (strain ATCC 35984 / DSM 28319 / BCRC 17069 / CCUG 31568 / BM 3577 / RP62A)).